The following is a 1358-amino-acid chain: Indole-3-acetaldehyde oxidase (1358 aa).

In terms of domain architecture, 2Fe-2S ferredoxin-type spans 11–98 (STVVLAVNGK…RCSVTTSEGI (88 aa)). C50, C55, and C58 together coordinate [2Fe-2S] cluster. An FAD-binding PCMH-type domain is found at 241–419 (IAASGDGWYH…LSIFIPEWGS (179 aa)). Residues 532–559 (SSAPSNIDTPNGSYTHETGSNVDSPERH) are disordered. Residues 537 to 554 (NIDTPNGSYTHETGSNVD) are compositionally biased toward polar residues.

Belongs to the xanthine dehydrogenase family. In terms of assembly, aldehyde oxidases (AO) are homodimers and heterodimers of AO subunits. Requires [2Fe-2S] cluster as cofactor. It depends on FAD as a cofactor. The cofactor is Mo-molybdopterin. As to expression, mostly expressed in roots, and, to a lower extent, in mesocotyl, leaves and coleoptile. Accumulates in apical region of maize coleoptiles (at protein level).

It is found in the cytoplasm. The catalysed reaction is indole-3-acetaldehyde + O2 + H2O = (indol-3-yl)acetate + H2O2 + H(+). With respect to regulation, inhibited by 2-mercaptoethanol, p-chloromercuribenzoate, and iodoacetate. In terms of biological role, in higher plants aldehyde oxidases (AO) appear to be homo- and heterodimeric assemblies of AO subunits with probably different physiological functions. Involved in the biosynthesis of auxin from (indol-3-yl)acetaldehyde. Can also use indole-3-aldehyde and benzaldehyde as substrate. The sequence is that of Indole-3-acetaldehyde oxidase (AO1) from Zea mays (Maize).